Here is a 488-residue protein sequence, read N- to C-terminus: uncharacterized protein (488 aa).

27–38 (IVHFGFGAFHRA) contacts NAD(+).

It belongs to the mannitol dehydrogenase family. UxuB subfamily.

This is an uncharacterized protein from Escherichia coli (strain K12).